Reading from the N-terminus, the 269-residue chain is Hydroxyethylthiazole kinase (269 aa).

Position 46 (Met-46) interacts with substrate. ATP-binding residues include Arg-122 and Thr-168. Gly-195 lines the substrate pocket.

Belongs to the Thz kinase family. The cofactor is Mg(2+).

It catalyses the reaction 5-(2-hydroxyethyl)-4-methylthiazole + ATP = 4-methyl-5-(2-phosphooxyethyl)-thiazole + ADP + H(+). It functions in the pathway cofactor biosynthesis; thiamine diphosphate biosynthesis; 4-methyl-5-(2-phosphoethyl)-thiazole from 5-(2-hydroxyethyl)-4-methylthiazole: step 1/1. In terms of biological role, catalyzes the phosphorylation of the hydroxyl group of 4-methyl-5-beta-hydroxyethylthiazole (THZ). The polypeptide is Hydroxyethylthiazole kinase (Geobacillus thermodenitrificans (strain NG80-2)).